Reading from the N-terminus, the 443-residue chain is D-alanyl-D-alanine carboxypeptidase DacA (443 aa).

The N-terminal stretch at 1–31 (MNIKKCKQLLMSLVVLTLAVTCLAPMSKAKA) is a signal peptide. Serine 67 serves as the catalytic Acyl-ester intermediate. Residue lysine 70 is the Proton acceptor of the active site. Residue serine 131 is part of the active site. Lysine 258 serves as a coordination point for substrate.

This sequence belongs to the peptidase S11 family.

It localises to the secreted. It is found in the cell wall. The protein localises to the cell membrane. The protein resides in the membrane raft. It carries out the reaction Preferential cleavage: (Ac)2-L-Lys-D-Ala-|-D-Ala. Also transpeptidation of peptidyl-alanyl moieties that are N-acyl substituents of D-alanine.. It participates in cell wall biogenesis; peptidoglycan biosynthesis. In terms of biological role, removes C-terminal D-alanyl residues from sugar-peptide cell wall precursors. This is D-alanyl-D-alanine carboxypeptidase DacA (dacA) from Bacillus subtilis (strain 168).